The following is a 242-amino-acid chain: Probable transcriptional regulatory protein Cphy_2507 (242 aa).

Belongs to the TACO1 family.

It is found in the cytoplasm. This chain is Probable transcriptional regulatory protein Cphy_2507, found in Lachnoclostridium phytofermentans (strain ATCC 700394 / DSM 18823 / ISDg) (Clostridium phytofermentans).